The primary structure comprises 284 residues: MKDSYQTIGVFVRPTHYQNPLFEELEQAKEWVLKLLEDEGFESFMIDSLDGAKDARLIEKAYAFLCLGGDGTILGALRMTHSYNKPCFGVRIGNLGFLSAVELNGLKDFLQDLKQNRIKLEEHLALEGRIGKTSFYAINEIVIAKKKALGVLDIKAYVGHTPFNTYKGDGLIIATPLGSTAYNLSAHGPIVHALSQSYILTPLCDFSLTQRPLVLGAEFCLNFCAHEDALVVIDGQATYDLKANQPLYIQKSPTTTKLLQKNSRDYFKVLKEKLLWGESPSKKR.

The active-site Proton acceptor is aspartate 70. NAD(+) contacts are provided by residues 70–71, 139–140, lysine 167, aspartate 169, leucine 177, 180–185, and glutamine 236; these read DG, NE, and TAYNLS.

Belongs to the NAD kinase family. A divalent metal cation is required as a cofactor.

The protein localises to the cytoplasm. The enzyme catalyses NAD(+) + ATP = ADP + NADP(+) + H(+). Its function is as follows. Involved in the regulation of the intracellular balance of NAD and NADP, and is a key enzyme in the biosynthesis of NADP. Catalyzes specifically the phosphorylation on 2'-hydroxyl of the adenosine moiety of NAD to yield NADP. This chain is NAD kinase, found in Helicobacter pylori (strain HPAG1).